We begin with the raw amino-acid sequence, 156 residues long: ATP synthase subunit b (156 aa).

The chain crosses the membrane as a helical span at residues 13–33; it reads AFIIFVWFCMKFVWPPLMNAI.

It belongs to the ATPase B chain family. As to quaternary structure, F-type ATPases have 2 components, F(1) - the catalytic core - and F(0) - the membrane proton channel. F(1) has five subunits: alpha(3), beta(3), gamma(1), delta(1), epsilon(1). F(0) has three main subunits: a(1), b(2) and c(10-14). The alpha and beta chains form an alternating ring which encloses part of the gamma chain. F(1) is attached to F(0) by a central stalk formed by the gamma and epsilon chains, while a peripheral stalk is formed by the delta and b chains.

Its subcellular location is the cell inner membrane. Functionally, f(1)F(0) ATP synthase produces ATP from ADP in the presence of a proton or sodium gradient. F-type ATPases consist of two structural domains, F(1) containing the extramembraneous catalytic core and F(0) containing the membrane proton channel, linked together by a central stalk and a peripheral stalk. During catalysis, ATP synthesis in the catalytic domain of F(1) is coupled via a rotary mechanism of the central stalk subunits to proton translocation. Its function is as follows. Component of the F(0) channel, it forms part of the peripheral stalk, linking F(1) to F(0). The sequence is that of ATP synthase subunit b from Shewanella sediminis (strain HAW-EB3).